Here is a 534-residue protein sequence, read N- to C-terminus: MKGGNADSWQREKLASMESPEEPGASMDENYFVNYTFKDRSHSGRVAQGIMKLCLEEELFADVTISVEGREFQLHRLVLSAQSCFFRSMFTSNLKEAHNRVIVLQDVSESVFQLLVDYIYHGTVKLRAEELQEIYEVSDMYQLTSLFEECSRFLARTVQVGNCLQVMWLADRHSDPELYTAAKHCAKTHLAQLQNTEEFLHLPHRLLTDIISDGVPCSQNPTEAIEAWINFNKEEREAFAESLRTSLKEIGENVHIYLIGKESSRTHSLAVSLHCAEDDSISVSGQNSLCHQITAACKHGGDLYVVGGSIPRRMWKCNNATVDWEWCAPLPRDRLQHTLVSVPGKDAIYSLGGKTLQDTLSNAVIYYRVGDNVWTETTQLEVAVSGAAGANLNGIIYLLGGEENDLDFFTKPSRLIQCFDTETDKCHVKPYVLPFAGRMHAAVHKDLVFIVAEGDSLVCYNPLLDSFTRLCLPEAWSSAPSLWKIASCNGSIYVFRDRYKKGDANTYKLDPATSAVTVTRGIKVLLTNLQFVLA.

Residues 1 to 25 (MKGGNADSWQREKLASMESPEEPGA) form a disordered region. A BTB domain is found at 61-128 (ADVTISVEGR…IYHGTVKLRA (68 aa)). Residues 163–255 (CLQVMWLADR…SLKEIGENVH (93 aa)) form the BACK domain. Kelch repeat units follow at residues 255-301 (HIYL…KHGG), 302-344 (DLYV…SVPG), 347-394 (AIYS…NLNG), 396-446 (IYLL…VHKD), and 448-497 (VFIV…VFRD).

As to quaternary structure, component of the BCR(KBTBD4) E3 ubiquitin ligase complex, at least composed of CUL3, KBTBD4 and RBX1.

Substrate-specific adapter of a BCR (BTB-CUL3-RBX1) E3 ubiquitin ligase complex which targets CoREST corepressor complex components RCOR1, KDM1A/LSD1 and HDAC2 for proteasomal degradation. RCOR1 is likely to be the primary target while degradation of KDM1A and HDAC2 is likely due to their association with RCOR1. Also targets RCOR3, MIER2 and MIER3 for proteasomal degradation as well as associated proteins ZNF217 and RREB1. Degradation is dependent on the presence of an ELM2 domain in the target proteins. The polypeptide is Kelch repeat and BTB domain-containing protein 4 (KBTBD4) (Homo sapiens (Human)).